The following is a 229-amino-acid chain: UPF0758 protein Ppro_3582 (229 aa).

The disordered stretch occupies residues 1 to 20; it reads MCPGIREWPEDERPREKMLR. Over residues 7 to 19 the composition is skewed to basic and acidic residues; the sequence is EWPEDERPREKML. The region spanning 107 to 229 is the MPN domain; that stretch reads RFTSPRQVFD…YLSFVERGVL (123 aa). 3 residues coordinate Zn(2+): H178, H180, and D191. A JAMM motif motif is present at residues 178 to 191; it reads HNHPTGDPTPSQED.

It belongs to the UPF0758 family.

The protein is UPF0758 protein Ppro_3582 of Pelobacter propionicus (strain DSM 2379 / NBRC 103807 / OttBd1).